A 157-amino-acid chain; its full sequence is Crossover junction endodeoxyribonuclease RuvC (157 aa).

Residues aspartate 7, glutamate 67, and aspartate 139 contribute to the active site. Aspartate 7, glutamate 67, and aspartate 139 together coordinate Mg(2+).

This sequence belongs to the RuvC family. Homodimer which binds Holliday junction (HJ) DNA. The HJ becomes 2-fold symmetrical on binding to RuvC with unstacked arms; it has a different conformation from HJ DNA in complex with RuvA. In the full resolvosome a probable DNA-RuvA(4)-RuvB(12)-RuvC(2) complex forms which resolves the HJ. It depends on Mg(2+) as a cofactor.

It localises to the cytoplasm. The enzyme catalyses Endonucleolytic cleavage at a junction such as a reciprocal single-stranded crossover between two homologous DNA duplexes (Holliday junction).. In terms of biological role, the RuvA-RuvB-RuvC complex processes Holliday junction (HJ) DNA during genetic recombination and DNA repair. Endonuclease that resolves HJ intermediates. Cleaves cruciform DNA by making single-stranded nicks across the HJ at symmetrical positions within the homologous arms, yielding a 5'-phosphate and a 3'-hydroxyl group; requires a central core of homology in the junction. The consensus cleavage sequence is 5'-(A/T)TT(C/G)-3'. Cleavage occurs on the 3'-side of the TT dinucleotide at the point of strand exchange. HJ branch migration catalyzed by RuvA-RuvB allows RuvC to scan DNA until it finds its consensus sequence, where it cleaves and resolves the cruciform DNA. In Prochlorococcus marinus (strain MIT 9312), this protein is Crossover junction endodeoxyribonuclease RuvC.